The sequence spans 200 residues: Recombination protein RecR (200 aa).

Residues 59–74 (CDICGNVCESSPCPVC) form a C4-type zinc finger. One can recognise a Toprim domain in the interval 82-177 (SVICVVEEPK…KVTRLASGLP (96 aa)).

This sequence belongs to the RecR family.

In terms of biological role, may play a role in DNA repair. It seems to be involved in an RecBC-independent recombinational process of DNA repair. It may act with RecF and RecO. This is Recombination protein RecR from Bifidobacterium longum (strain DJO10A).